Here is a 237-residue protein sequence, read N- to C-terminus: Ras modification protein ERF4 (237 aa).

Belongs to the ERF4 family. Interacts with ERF2.

The protein localises to the endoplasmic reticulum membrane. In terms of biological role, the ERF2-SHR5 complex is a palmitoyltransferase specific for Ras proteins. Palmitoylates RAS2, which is required for its proper plasma membrane localization. The protein is Ras modification protein ERF4 (SHR5) of Saccharomyces cerevisiae (strain ATCC 204508 / S288c) (Baker's yeast).